We begin with the raw amino-acid sequence, 135 residues long: MRSSSLPGARSPRRNGSGQSRHRLPPGRLRTGSRAPTAEARPHVARSPPTPGTGARGGGRRGWGGSRAAPQRGSCASANAQKQLRQTAATYMLTARGGSRSAERKGDLQRTFRQVGQTMPMVPPLDFTMNAASVE.

The segment at Met1–Ala80 is disordered. The segment covering Gly54–Gly65 has biased composition (gly residues).

This is an uncharacterized protein from Homo sapiens (Human).